The primary structure comprises 73 residues: Putative membrane protein insertion efficiency factor (73 aa).

The protein belongs to the UPF0161 family.

It localises to the cell inner membrane. Its function is as follows. Could be involved in insertion of integral membrane proteins into the membrane. This is Putative membrane protein insertion efficiency factor from Rickettsia bellii (strain RML369-C).